The chain runs to 564 residues: Iron-sensing transcriptional repressor (564 aa).

Residues 12–36 (CSNCHKTTTSLWRRGPDNSLLCNAC) form a GATA-type 1 zinc finger. The tract at residues 100 to 170 (ASKSQSGRKS…SSPPHEPSVT (71 aa)) is disordered. S109 carries the phosphoserine modification. Positions 109 to 120 (SLSPNPSSVPSS) are enriched in low complexity. Residues 135–148 (QIVSDTTTETSNGT) are compositionally biased toward polar residues. The segment at 172–196 (CQNCATTNTPLWRRDESGNPICNAC) adopts a GATA-type 2 zinc-finger fold. Disordered stretches follow at residues 226-285 (GNAN…NTGV), 381-409 (DSSKQLSESTTSNTDNNGVATANQSNPLG), and 443-496 (LLNP…VQGS). 4 stretches are compositionally biased toward polar residues: residues 240-253 (SGDSGSSVKQQSTR), 260-271 (SFPNGNGHASGN), 381-407 (DSSKQLSESTTSNTDNNGVATANQSNP), and 450-486 (PSNSDKQPSMSNGPKSEVSPSQSQQAPLIQSSTSPVS).

Interacts with tup11.

It localises to the nucleus. With respect to regulation, activated by iron. Transcriptional repressor that binds the consensus promoter sequence 5'-[AT]GATAA-3' during iron-replete conditions to down-regulate transcription of target genes. Represses the expression of the iron transporter fio1 in response to high iron concentrations. Also represses the expression of str1, str2 and str3. Represses the expression of shu1 in presence of iron. This chain is Iron-sensing transcriptional repressor, found in Schizosaccharomyces pombe (strain 972 / ATCC 24843) (Fission yeast).